Consider the following 115-residue polypeptide: Putative gamma-glutamylcyclotransferase VC_2546 (115 aa).

8–11 is a substrate binding site; the sequence is YGTL. Glutamate 73 (proton acceptor) is an active-site residue.

This sequence belongs to the gamma-glutamylcyclotransferase family.

Functionally, putative gamma-glutamylcyclotransferase. The polypeptide is Putative gamma-glutamylcyclotransferase VC_2546 (Vibrio cholerae serotype O1 (strain ATCC 39315 / El Tor Inaba N16961)).